The following is a 244-amino-acid chain: Tegument protein UL51 (244 aa).

Cys-9 carries S-palmitoyl cysteine; by host lipidation. The tract at residues 178–244 (GVTEAPSLGH…SRAAPCVLGQ (67 aa)) is disordered. A compositionally biased stretch (low complexity) spans 221–244 (PRPTASPTAPRPGPSRAAPCVLGQ).

This sequence belongs to the herpesviridae UL51 family. As to quaternary structure, oligomerizes. Interacts with UL7; this interaction mediates UL7 incorporation to virions. Interacts with UL14. Phosphorylated. Post-translationally, palmitoylation is necessary for Golgi localization.

It is found in the virion tegument. The protein resides in the host cytoplasm. It localises to the host Golgi apparatus. Functionally, plays several roles during the time course of infection, including egress of virus particles from the perinuclear space and secondary envelopment of cytoplasmic capsids that bud into specific trans-Golgi network (TGN)-derived membranes. Plays also an essential role in the maintenance of host cytoplasmic viral assembly center (cVAC) morphology in primary host neuronal cells. The protein is Tegument protein UL51 of Homo sapiens (Human).